The sequence spans 430 residues: Protein translocase subunit SecY (430 aa).

10 helical membrane-spanning segments follow: residues 18–38, 68–88, 117–137, 147–167, 174–194, 217–237, 270–290, 308–328, 368–388, and 389–409; these read IFFT…PAPG, FSIF…MQLL, FAII…NNYL, VMSY…LIWL, FGVG…TLPS, ILGL…VLEA, VIPV…TLFF, NIGM…YAFV, FVGS…TKFM, and GLPQ…GVAI.

This sequence belongs to the SecY/SEC61-alpha family. As to quaternary structure, component of the Sec protein translocase complex. Heterotrimer consisting of SecY, SecE and SecG subunits. The heterotrimers can form oligomers, although 1 heterotrimer is thought to be able to translocate proteins. Interacts with the ribosome. Interacts with SecDF, and other proteins may be involved. Interacts with SecA.

Its subcellular location is the cell membrane. In terms of biological role, the central subunit of the protein translocation channel SecYEG. Consists of two halves formed by TMs 1-5 and 6-10. These two domains form a lateral gate at the front which open onto the bilayer between TMs 2 and 7, and are clamped together by SecE at the back. The channel is closed by both a pore ring composed of hydrophobic SecY resides and a short helix (helix 2A) on the extracellular side of the membrane which forms a plug. The plug probably moves laterally to allow the channel to open. The ring and the pore may move independently. In Staphylococcus epidermidis (strain ATCC 35984 / DSM 28319 / BCRC 17069 / CCUG 31568 / BM 3577 / RP62A), this protein is Protein translocase subunit SecY.